A 367-amino-acid chain; its full sequence is Aspartate-semialdehyde dehydrogenase (367 aa).

NADP(+) contacts are provided by residues 10-13 (RGMV), 37-38 (TS), and Q73. R102 contributes to the phosphate binding site. C135 serves as the catalytic Acyl-thioester intermediate. Residue C135 is modified to S-cysteinyl cysteine; in inhibited form. Q162 provides a ligand contact to substrate. NADP(+) is bound by residues 165-169 (SGGGA), R173, and P193. A substrate-binding site is contributed by E241. A phosphate-binding site is contributed by K244. R267 provides a ligand contact to substrate. H274 serves as the catalytic Proton acceptor. Q350 contacts NADP(+).

The protein belongs to the aspartate-semialdehyde dehydrogenase family. As to quaternary structure, homodimer.

It catalyses the reaction L-aspartate 4-semialdehyde + phosphate + NADP(+) = 4-phospho-L-aspartate + NADPH + H(+). Its pathway is amino-acid biosynthesis; L-lysine biosynthesis via DAP pathway; (S)-tetrahydrodipicolinate from L-aspartate: step 2/4. It functions in the pathway amino-acid biosynthesis; L-methionine biosynthesis via de novo pathway; L-homoserine from L-aspartate: step 2/3. The protein operates within amino-acid biosynthesis; L-threonine biosynthesis; L-threonine from L-aspartate: step 2/5. With respect to regulation, is inhibited by L- and D-cystine, and by other cystine derivatives, via the formation of a covalently bound cysteine at the active site Cys-135. Its function is as follows. Catalyzes the NADPH-dependent formation of L-aspartate-semialdehyde (L-ASA) by the reductive dephosphorylation of L-aspartyl-4-phosphate. The polypeptide is Aspartate-semialdehyde dehydrogenase (Escherichia coli (strain K12)).